A 373-amino-acid chain; its full sequence is DNA replication and repair protein RecF (373 aa).

Gly30 to Thr37 lines the ATP pocket.

It belongs to the RecF family.

The protein localises to the cytoplasm. The RecF protein is involved in DNA metabolism; it is required for DNA replication and normal SOS inducibility. RecF binds preferentially to single-stranded, linear DNA. It also seems to bind ATP. This Limosilactobacillus fermentum (strain NBRC 3956 / LMG 18251) (Lactobacillus fermentum) protein is DNA replication and repair protein RecF.